The sequence spans 520 residues: 2-isopropylmalate synthase (520 aa).

One can recognise a Pyruvate carboxyltransferase domain in the interval 12–274; sequence IRIFDTTLRD…DSAINTPRIV (263 aa). Mn(2+) contacts are provided by Asp21, His209, His211, and Asn245. Residues 396–520 are regulatory domain; the sequence is RLASMTISDV…VIAGKTAAVA (125 aa).

It belongs to the alpha-IPM synthase/homocitrate synthase family. LeuA type 1 subfamily. In terms of assembly, homodimer. Requires Mn(2+) as cofactor.

It is found in the cytoplasm. It carries out the reaction 3-methyl-2-oxobutanoate + acetyl-CoA + H2O = (2S)-2-isopropylmalate + CoA + H(+). Its pathway is amino-acid biosynthesis; L-leucine biosynthesis; L-leucine from 3-methyl-2-oxobutanoate: step 1/4. In terms of biological role, catalyzes the condensation of the acetyl group of acetyl-CoA with 3-methyl-2-oxobutanoate (2-ketoisovalerate) to form 3-carboxy-3-hydroxy-4-methylpentanoate (2-isopropylmalate). The chain is 2-isopropylmalate synthase from Xanthomonas oryzae pv. oryzae (strain MAFF 311018).